The chain runs to 392 residues: Galactose-1-phosphate uridylyltransferase (392 aa).

C52 and C55 together coordinate Zn(2+). UDP-alpha-D-glucose is bound by residues A61 and 77–78 (ND). A Zn(2+)-binding site is contributed by H126. UDP-alpha-D-glucose is bound at residue N194. H205 serves as a coordination point for Zn(2+). H207 acts as the Tele-UMP-histidine intermediate in catalysis. Q209 contributes to the UDP-alpha-D-glucose binding site. E223, H323, H340, and H342 together coordinate Fe cation. Residues 355-358 (KFLV) and 360-361 (YE) contribute to the UDP-alpha-D-glucose site.

The protein belongs to the galactose-1-phosphate uridylyltransferase type 1 family. Homodimer. The cofactor is Zn(2+).

It catalyses the reaction alpha-D-galactose 1-phosphate + UDP-alpha-D-glucose = alpha-D-glucose 1-phosphate + UDP-alpha-D-galactose. Its pathway is carbohydrate metabolism; galactose metabolism. This Neurospora crassa (strain ATCC 24698 / 74-OR23-1A / CBS 708.71 / DSM 1257 / FGSC 987) protein is Galactose-1-phosphate uridylyltransferase (gal-7).